A 498-amino-acid chain; its full sequence is ATP synthase subunit beta, chloroplastic (498 aa).

172–179 is a binding site for ATP; sequence GGAGVGKT.

The protein belongs to the ATPase alpha/beta chains family. F-type ATPases have 2 components, CF(1) - the catalytic core - and CF(0) - the membrane proton channel. CF(1) has five subunits: alpha(3), beta(3), gamma(1), delta(1), epsilon(1). CF(0) has four main subunits: a(1), b(1), b'(1) and c(9-12).

The protein resides in the plastid. Its subcellular location is the chloroplast thylakoid membrane. It carries out the reaction ATP + H2O + 4 H(+)(in) = ADP + phosphate + 5 H(+)(out). In terms of biological role, produces ATP from ADP in the presence of a proton gradient across the membrane. The catalytic sites are hosted primarily by the beta subunits. This Calamus usitatus (Palm tree) protein is ATP synthase subunit beta, chloroplastic.